The chain runs to 298 residues: Elongation factor Ts (298 aa).

The tract at residues 79-82 is involved in Mg(2+) ion dislocation from EF-Tu; the sequence is TDFV.

The protein belongs to the EF-Ts family.

The protein resides in the cytoplasm. Associates with the EF-Tu.GDP complex and induces the exchange of GDP to GTP. It remains bound to the aminoacyl-tRNA.EF-Tu.GTP complex up to the GTP hydrolysis stage on the ribosome. This is Elongation factor Ts (tsf) from Mycoplasma genitalium (strain ATCC 33530 / DSM 19775 / NCTC 10195 / G37) (Mycoplasmoides genitalium).